Here is a 443-residue protein sequence, read N- to C-terminus: Thymidine phosphorylase (443 aa).

It belongs to the thymidine/pyrimidine-nucleoside phosphorylase family. As to quaternary structure, homodimer.

It carries out the reaction thymidine + phosphate = 2-deoxy-alpha-D-ribose 1-phosphate + thymine. The protein operates within pyrimidine metabolism; dTMP biosynthesis via salvage pathway; dTMP from thymine: step 1/2. In terms of biological role, the enzymes which catalyze the reversible phosphorolysis of pyrimidine nucleosides are involved in the degradation of these compounds and in their utilization as carbon and energy sources, or in the rescue of pyrimidine bases for nucleotide synthesis. The polypeptide is Thymidine phosphorylase (Shewanella frigidimarina (strain NCIMB 400)).